Reading from the N-terminus, the 517-residue chain is B3 domain-containing protein REM1 (517 aa).

The segment at residues 7 to 92 (FSLFQQKFRT…VFHVAVVSPS (86 aa)) is a DNA-binding region (TF-B3 1). A compositionally biased stretch (acidic residues) spans 115–140 (DDVDDDDYGQDDEDDDDDDDEGEDNI). Residues 115 to 158 (DDVDDDDYGQDDEDDDDDDDEGEDNIENISEKTDKRQEADSSSD) are disordered. Positions 143–157 (ISEKTDKRQEADSSS) are enriched in basic and acidic residues. 2 consecutive DNA-binding regions (TF-B3) follow at residues 162–259 (FITA…CPQE) and 285–385 (FLIV…FCSK). The disordered stretch occupies residues 393-415 (GKGNQRTRKKRACETAPQPRNVK).

In terms of tissue distribution, expressed in the shoot apical meristem (SAM), in the inflorescence apex and flowers.

The protein localises to the nucleus. Functionally, may play a role in flower development. The chain is B3 domain-containing protein REM1 (REM1) from Arabidopsis thaliana (Mouse-ear cress).